The following is a 368-amino-acid chain: DNA replication and repair protein RecF (368 aa).

Residue 30-37 (GDNGAGKT) coordinates ATP.

This sequence belongs to the RecF family.

It is found in the cytoplasm. In terms of biological role, the RecF protein is involved in DNA metabolism; it is required for DNA replication and normal SOS inducibility. RecF binds preferentially to single-stranded, linear DNA. It also seems to bind ATP. The polypeptide is DNA replication and repair protein RecF (Xanthomonas oryzae pv. oryzae (strain KACC10331 / KXO85)).